Consider the following 1299-residue polypeptide: Phosphoribosylformylglycinamidine synthase (1299 aa).

ATP contacts are provided by residues 310 to 321 (GAATGAGGEIRD), 389 to 391 (TGY), and Ala-680. 4 residues coordinate Mg(2+): Asp-681, Glu-720, Asn-724, and Asp-888. An ATP-binding site is contributed by Ser-890. A Glutamine amidotransferase type-1 domain is found at 1046–1299 (VAVLREQGVN…MFRNARVWLG (254 aa)). Catalysis depends on Cys-1139, which acts as the Nucleophile. Active-site residues include His-1264 and Glu-1266.

The protein in the N-terminal section; belongs to the FGAMS family. In terms of assembly, monomer.

It localises to the cytoplasm. It carries out the reaction N(2)-formyl-N(1)-(5-phospho-beta-D-ribosyl)glycinamide + L-glutamine + ATP + H2O = 2-formamido-N(1)-(5-O-phospho-beta-D-ribosyl)acetamidine + L-glutamate + ADP + phosphate + H(+). The protein operates within purine metabolism; IMP biosynthesis via de novo pathway; 5-amino-1-(5-phospho-D-ribosyl)imidazole from N(2)-formyl-N(1)-(5-phospho-D-ribosyl)glycinamide: step 1/2. Its function is as follows. Phosphoribosylformylglycinamidine synthase involved in the purines biosynthetic pathway. Catalyzes the ATP-dependent conversion of formylglycinamide ribonucleotide (FGAR) and glutamine to yield formylglycinamidine ribonucleotide (FGAM) and glutamate. The protein is Phosphoribosylformylglycinamidine synthase of Myxococcus xanthus (strain DK1622).